The following is a 296-amino-acid chain: MEQFRNIGIIGRLGSVQVLETVRRLKRFLLDRHLHVILEETIAEVLPGHGLQTSSRKMLGEVCDMVIVVGGDGSLLGAARALARHNVPVLGINRGSLGFLTDIRPDELEVKCAEVLDGHYLVENRFLLQAEVRRHGEAIGQGDALNDVVLHPGKSTRMIEFEIYIDGQFVCSQKADGLIVATPTGSTAYALSAGGPIMHPKLDAIVIVPMYPHTLSGRPIVVDGNSELKIVVSKDMTIYPQVSCDGQNHFTCAPGDTITVSKKPQKLRLIHPLDHNYYEVCRTKLGWGSKLGGGGD.

Asp-72 (proton acceptor) is an active-site residue. Residues 72–73, 146–147, Arg-157, Lys-174, Asp-176, 187–192, and Gln-247 each bind NAD(+); these read DG, ND, and TAYALS.

It belongs to the NAD kinase family. A divalent metal cation serves as cofactor.

Its subcellular location is the cytoplasm. It catalyses the reaction NAD(+) + ATP = ADP + NADP(+) + H(+). In terms of biological role, involved in the regulation of the intracellular balance of NAD and NADP, and is a key enzyme in the biosynthesis of NADP. Catalyzes specifically the phosphorylation on 2'-hydroxyl of the adenosine moiety of NAD to yield NADP. The protein is NAD kinase of Pseudomonas syringae pv. syringae (strain B728a).